Consider the following 227-residue polypeptide: Ribose-5-phosphate isomerase A (227 aa).

Substrate-binding positions include 26–29 (TGST), 82–85 (DGAD), and 95–98 (KGGG). Glu-104 acts as the Proton acceptor in catalysis. Lys-122 is a binding site for substrate.

This sequence belongs to the ribose 5-phosphate isomerase family. As to quaternary structure, homodimer.

The catalysed reaction is aldehydo-D-ribose 5-phosphate = D-ribulose 5-phosphate. The protein operates within carbohydrate degradation; pentose phosphate pathway; D-ribose 5-phosphate from D-ribulose 5-phosphate (non-oxidative stage): step 1/1. Functionally, catalyzes the reversible conversion of ribose-5-phosphate to ribulose 5-phosphate. This chain is Ribose-5-phosphate isomerase A, found in Streptococcus pyogenes serotype M2 (strain MGAS10270).